A 426-amino-acid chain; its full sequence is Flotillin-1 (426 aa).

This sequence belongs to the band 7/mec-2 family. Flotillin subfamily. As to quaternary structure, heterooligomeric complex of flotillins 1 and 2 and caveolins 1 and 2. Expressed in brain and ventral nerve cord from stage 12-16 of embryogenesis.

The protein localises to the cell membrane. The protein resides in the membrane. It is found in the caveola. May act as a scaffolding protein within caveolar membranes, functionally participating in formation of caveolae or caveolae-like vesicles. The chain is Flotillin-1 from Drosophila melanogaster (Fruit fly).